Consider the following 415-residue polypeptide: DNA polymerase IV 2 (415 aa).

Positions 7-183 (ILHADLDAFY…LPVSLMWGVG (177 aa)) constitute a UmuC domain. Mg(2+)-binding residues include Asp-11 and Asp-101. The active site involves Glu-102.

The protein belongs to the DNA polymerase type-Y family. As to quaternary structure, monomer. Mg(2+) serves as cofactor.

It is found in the cytoplasm. The enzyme catalyses DNA(n) + a 2'-deoxyribonucleoside 5'-triphosphate = DNA(n+1) + diphosphate. In terms of biological role, poorly processive, error-prone DNA polymerase involved in untargeted mutagenesis. Copies undamaged DNA at stalled replication forks, which arise in vivo from mismatched or misaligned primer ends. These misaligned primers can be extended by PolIV. Exhibits no 3'-5' exonuclease (proofreading) activity. May be involved in translesional synthesis, in conjunction with the beta clamp from PolIII. The polypeptide is DNA polymerase IV 2 (dinB2) (Mesorhizobium japonicum (strain LMG 29417 / CECT 9101 / MAFF 303099) (Mesorhizobium loti (strain MAFF 303099))).